Reading from the N-terminus, the 340-residue chain is Methionine import ATP-binding protein MetN 2 (340 aa).

The region spanning 2-241 (ITLQNVVKEY…PQEKVTQRFV (240 aa)) is the ABC transporter domain. An ATP-binding site is contributed by 38–45 (GYSGAGKS).

Belongs to the ABC transporter superfamily. Methionine importer (TC 3.A.1.24) family. In terms of assembly, the complex is composed of two ATP-binding proteins (MetN), two transmembrane proteins (MetI) and a solute-binding protein (MetQ).

Its subcellular location is the cell membrane. The enzyme catalyses L-methionine(out) + ATP + H2O = L-methionine(in) + ADP + phosphate + H(+). It carries out the reaction D-methionine(out) + ATP + H2O = D-methionine(in) + ADP + phosphate + H(+). Functionally, part of the ABC transporter complex MetNIQ involved in methionine import. Responsible for energy coupling to the transport system. The polypeptide is Methionine import ATP-binding protein MetN 2 (Listeria monocytogenes serotype 4b (strain F2365)).